The following is a 190-amino-acid chain: Potassium-transporting ATPase KdpC subunit (190 aa).

Residues 10 to 30 (TFLFLLLITGGVYPLLTTALG) form a helical membrane-spanning segment.

Belongs to the KdpC family. As to quaternary structure, the system is composed of three essential subunits: KdpA, KdpB and KdpC.

Its subcellular location is the cell inner membrane. In terms of biological role, part of the high-affinity ATP-driven potassium transport (or Kdp) system, which catalyzes the hydrolysis of ATP coupled with the electrogenic transport of potassium into the cytoplasm. This subunit acts as a catalytic chaperone that increases the ATP-binding affinity of the ATP-hydrolyzing subunit KdpB by the formation of a transient KdpB/KdpC/ATP ternary complex. This chain is Potassium-transporting ATPase KdpC subunit, found in Escherichia coli (strain SMS-3-5 / SECEC).